A 127-amino-acid chain; its full sequence is Large ribosomal subunit protein bL17 (127 aa).

The protein belongs to the bacterial ribosomal protein bL17 family. Part of the 50S ribosomal subunit. Contacts protein L32.

This chain is Large ribosomal subunit protein bL17, found in Leuconostoc citreum (strain KM20).